The chain runs to 215 residues: 3-isopropylmalate dehydratase small subunit (215 aa).

This sequence belongs to the LeuD family. LeuD type 1 subfamily. Heterodimer of LeuC and LeuD.

The enzyme catalyses (2R,3S)-3-isopropylmalate = (2S)-2-isopropylmalate. The protein operates within amino-acid biosynthesis; L-leucine biosynthesis; L-leucine from 3-methyl-2-oxobutanoate: step 2/4. Functionally, catalyzes the isomerization between 2-isopropylmalate and 3-isopropylmalate, via the formation of 2-isopropylmaleate. The sequence is that of 3-isopropylmalate dehydratase small subunit from Xanthomonas euvesicatoria pv. vesicatoria (strain 85-10) (Xanthomonas campestris pv. vesicatoria).